The following is a 60-amino-acid chain: Large ribosomal subunit protein bL33 (60 aa).

This sequence belongs to the bacterial ribosomal protein bL33 family.

This is Large ribosomal subunit protein bL33 from Chlorobium phaeovibrioides (strain DSM 265 / 1930) (Prosthecochloris vibrioformis (strain DSM 265)).